The primary structure comprises 364 residues: MLWPALRSVLFQLDPERVHHLAHWALHRVPLAVARARRPAPIPALAVRCMGLDFDGPVGLAAGFDKGDVALPGLFGLGFSHVEIGTITPRPQPGNDRPRLFRLPEHRALLNRMGFNNEGMEACARRLAALPPAARLGPVGINVGKNKVTPNEDAAADYLACIERLHPYADYLVVNISSPNTPGLRQLQERDALDRLLRACVRHLAERAPGKPLLVKLAPDLSPEALDEAVDVAIAAGAAGIVATNTTLSRAGVERHPRAAEAGGLSGAPLERLATDVVRRCYARAAGRVPIVGVGGVMDAEGAYAKIRAGATLVQAYTGLIYGGPGFVGRVNAGLARLLERDEFSTLSDAIGADHRQGGGKAAG.

FMN is bound by residues 62-66 (AGFDK) and threonine 86. Lysine 66 contacts substrate. 111 to 115 (NRMGF) is a substrate binding site. FMN contacts are provided by asparagine 142 and asparagine 175. Residue asparagine 175 coordinates substrate. Residue serine 178 is the Nucleophile of the active site. Asparagine 180 provides a ligand contact to substrate. The FMN site is built by lysine 216 and threonine 244. 245-246 (NT) serves as a coordination point for substrate. FMN is bound by residues glycine 267, glycine 296, and 317–318 (YT).

Belongs to the dihydroorotate dehydrogenase family. Type 2 subfamily. In terms of assembly, monomer. It depends on FMN as a cofactor.

The protein localises to the cell membrane. It catalyses the reaction (S)-dihydroorotate + a quinone = orotate + a quinol. It functions in the pathway pyrimidine metabolism; UMP biosynthesis via de novo pathway; orotate from (S)-dihydroorotate (quinone route): step 1/1. Catalyzes the conversion of dihydroorotate to orotate with quinone as electron acceptor. The sequence is that of Dihydroorotate dehydrogenase (quinone) from Anaeromyxobacter sp. (strain K).